Here is a 464-residue protein sequence, read N- to C-terminus: C-terminal processing peptidase, chloroplastic (464 aa).

The transit peptide at 1-32 (MHSRTNCLQTSVRAPQPHFRPFTAVKTCRQRC) directs the protein to the chloroplast. A thylakoid-targeting transit peptide spans 33-77 (STTAAAAKRDQAQEQQPWIQVGLGLAAAATAVAVGLGAAALPAQA). In terms of domain architecture, PDZ spans 149 to 234 (LAALRRGTAG…SQVEVVLHAP (86 aa)). Catalysis depends on charge relay system residues Ser-372 and Lys-397.

It belongs to the peptidase S41A family. In terms of assembly, monomer.

The protein resides in the plastid. It is found in the chloroplast thylakoid lumen. It catalyses the reaction The enzyme shows specific recognition of a C-terminal tripeptide, Xaa-Yaa-Zaa, in which Xaa is preferably Ala or Leu, Yaa is preferably Ala or Tyr, and Zaa is preferably Ala, but then cleaves at a variable distance from the C-terminus. A typical cleavage is -Ala-Ala-|-Arg-Ala-Ala-Lys-Glu-Asn-Tyr-Ala-Leu-Ala-Ala.. Not inhibited by antipain, 4-amidinophenylmethanesulfonyl fluoride, aprotinin, chymostatin, 3,4-dichloroisocoumarin, diisopropyl fluorophosphate, E64, EDTA, EGTA, iodoacetamide, leupeptin, pepstatin, o-phenanthroline, N-ethylmaleimide, phosphoramidon or phenylmethylsulfonyl fluoride. Protease involved in the C-terminal processing of the chloroplastic D1 protein of photosystem II. This proteolytic processing is necessary to allow the light-driven assembly of the tetranuclear manganese cluster, which is responsible for photosynthetic water oxidation. This chain is C-terminal processing peptidase, chloroplastic (ctpA), found in Tetradesmus obliquus (Green alga).